Here is a 308-residue protein sequence, read N- to C-terminus: F-actin-capping protein subunit alpha (308 aa).

The protein belongs to the F-actin-capping protein alpha subunit family. Component of the F-actin capping complex, composed of a heterodimer of an alpha and a beta subunit.

Its function is as follows. F-actin-capping proteins bind in a Ca(2+)-independent manner to the fast growing ends of actin filaments (barbed end) thereby blocking the exchange of subunits at these ends. Unlike other capping proteins (such as gelsolin and severin), these proteins do not sever actin filaments. This is F-actin-capping protein subunit alpha from Arabidopsis thaliana (Mouse-ear cress).